We begin with the raw amino-acid sequence, 333 residues long: Transcription initiation factor IIB (333 aa).

The TFIIB-type zinc-finger motif lies at 33 to 64; the sequence is EVYRCPICGNDKFIYNYERGEVVCIVCGAVVQ. 4 residues coordinate Zn(2+): Cys37, Cys40, Cys56, and Cys59. 2 consecutive repeat copies span residues 149–232 and 243–324.

This sequence belongs to the TFIIB family.

Stabilizes TBP binding to an archaeal box-A promoter. Also responsible for recruiting RNA polymerase II to the pre-initiation complex (DNA-TBP-TFIIB). The chain is Transcription initiation factor IIB from Pyrobaculum neutrophilum (strain DSM 2338 / JCM 9278 / NBRC 100436 / V24Sta) (Thermoproteus neutrophilus).